A 227-amino-acid chain; its full sequence is UPF0758 protein Spro_4842 (227 aa).

The MPN domain occupies 105–227 (AMLNPRMTQH…CVSFAERGWL (123 aa)). Zn(2+)-binding residues include His176, His178, and Asp189. Residues 176–189 (HNHPSGKAEPSHAD) carry the JAMM motif motif.

This sequence belongs to the UPF0758 family. YicR subfamily.

The polypeptide is UPF0758 protein Spro_4842 (Serratia proteamaculans (strain 568)).